The primary structure comprises 313 residues: Solute carrier family 35 member E3 (313 aa).

9 helical membrane passes run G17–V37, G40–I60, L77–N97, F126–L143, F153–V173, L187–F206, L225–I245, T252–F272, and P275–T295.

This sequence belongs to the TPT transporter family. SLC35E subfamily.

It localises to the membrane. Putative transporter. The protein is Solute carrier family 35 member E3 (SLC35E3) of Homo sapiens (Human).